We begin with the raw amino-acid sequence, 34 residues long: Protein HRURF (34 aa).

Functionally, may function as an inhibitory translational control element that can negatively regulate protein translation of HR gene. This is Protein HRURF from Homo sapiens (Human).